Reading from the N-terminus, the 411-residue chain is Serine hydroxymethyltransferase (411 aa).

(6S)-5,6,7,8-tetrahydrofolate contacts are provided by residues L119 and 123-125 (GHL). N6-(pyridoxal phosphate)lysine is present on K228. 351–353 (SPF) lines the (6S)-5,6,7,8-tetrahydrofolate pocket.

The protein belongs to the SHMT family. As to quaternary structure, homodimer. Requires pyridoxal 5'-phosphate as cofactor.

Its subcellular location is the cytoplasm. The enzyme catalyses (6R)-5,10-methylene-5,6,7,8-tetrahydrofolate + glycine + H2O = (6S)-5,6,7,8-tetrahydrofolate + L-serine. Its pathway is one-carbon metabolism; tetrahydrofolate interconversion. It participates in amino-acid biosynthesis; glycine biosynthesis; glycine from L-serine: step 1/1. Its function is as follows. Catalyzes the reversible interconversion of serine and glycine with tetrahydrofolate (THF) serving as the one-carbon carrier. This reaction serves as the major source of one-carbon groups required for the biosynthesis of purines, thymidylate, methionine, and other important biomolecules. Also exhibits THF-independent aldolase activity toward beta-hydroxyamino acids, producing glycine and aldehydes, via a retro-aldol mechanism. This chain is Serine hydroxymethyltransferase, found in Clostridium novyi (strain NT).